The chain runs to 354 residues: Protein C42 (354 aa).

A Nuclear localization signal motif is present at residues 349 to 352 (KRKK).

Belongs to the baculoviridae C42 protein family.

It localises to the host nucleus. The polypeptide is Protein C42 (Orgyia pseudotsugata (Douglas-fir tussock moth)).